The chain runs to 150 residues: Large ribosomal subunit protein bL9 (150 aa).

Belongs to the bacterial ribosomal protein bL9 family.

In terms of biological role, binds to the 23S rRNA. This is Large ribosomal subunit protein bL9 from Paraburkholderia xenovorans (strain LB400).